A 129-amino-acid chain; its full sequence is Small ribosomal subunit protein uS11 (129 aa).

It belongs to the universal ribosomal protein uS11 family. Part of the 30S ribosomal subunit. Interacts with proteins S7 and S18. Binds to IF-3.

Located on the platform of the 30S subunit, it bridges several disparate RNA helices of the 16S rRNA. Forms part of the Shine-Dalgarno cleft in the 70S ribosome. The sequence is that of Small ribosomal subunit protein uS11 from Methylobacterium sp. (strain 4-46).